The sequence spans 728 residues: Polyribonucleotide nucleotidyltransferase (728 aa).

The Mg(2+) site is built by aspartate 488 and aspartate 494. One can recognise a KH domain in the interval 555–614 (PRMITMKIHPDKIREVIGKGGSTIQALTKETGTTIDIQEDGTITIASTSTDGMAEAKRRI). The 69-residue stretch at 624 to 692 (GKIYNGTVLK…EKGRLRLSLK (69 aa)) folds into the S1 motif domain. The interval 702–728 (ISPVNAGEAAPAPAPAAAPATPSDQQQ) is disordered. A compositionally biased stretch (low complexity) spans 710-721 (AAPAPAPAAAPA).

The protein belongs to the polyribonucleotide nucleotidyltransferase family. The cofactor is Mg(2+).

The protein localises to the cytoplasm. The enzyme catalyses RNA(n+1) + phosphate = RNA(n) + a ribonucleoside 5'-diphosphate. In terms of biological role, involved in mRNA degradation. Catalyzes the phosphorolysis of single-stranded polyribonucleotides processively in the 3'- to 5'-direction. The polypeptide is Polyribonucleotide nucleotidyltransferase (Cupriavidus pinatubonensis (strain JMP 134 / LMG 1197) (Cupriavidus necator (strain JMP 134))).